Reading from the N-terminus, the 465-residue chain is Glutamate--tRNA ligase (465 aa).

The 'HIGH' region signature appears at 10–20; sequence PSPTGQLHIGG. The Zn(2+) site is built by Cys-99, Cys-101, Cys-126, and Glu-128. The 'KMSKS' region signature appears at 236-240; sequence KLSKR. Position 239 (Lys-239) interacts with ATP.

It belongs to the class-I aminoacyl-tRNA synthetase family. Glutamate--tRNA ligase type 1 subfamily. In terms of assembly, monomer. Requires Zn(2+) as cofactor.

The protein resides in the cytoplasm. It catalyses the reaction tRNA(Glu) + L-glutamate + ATP = L-glutamyl-tRNA(Glu) + AMP + diphosphate. Catalyzes the attachment of glutamate to tRNA(Glu) in a two-step reaction: glutamate is first activated by ATP to form Glu-AMP and then transferred to the acceptor end of tRNA(Glu). This is Glutamate--tRNA ligase from Lawsonia intracellularis (strain PHE/MN1-00).